The chain runs to 328 residues: GMP reductase (328 aa).

C174 acts as the Thioimidate intermediate in catalysis. Residue 203–226 (IIADGGIRTHGDIAKSIRFGASMV) participates in NADP(+) binding.

It belongs to the IMPDH/GMPR family. GuaC type 2 subfamily.

It carries out the reaction IMP + NH4(+) + NADP(+) = GMP + NADPH + 2 H(+). Functionally, catalyzes the irreversible NADPH-dependent deamination of GMP to IMP. It functions in the conversion of nucleobase, nucleoside and nucleotide derivatives of G to A nucleotides, and in maintaining the intracellular balance of A and G nucleotides. This Staphylococcus saprophyticus subsp. saprophyticus (strain ATCC 15305 / DSM 20229 / NCIMB 8711 / NCTC 7292 / S-41) protein is GMP reductase.